The primary structure comprises 441 residues: Xaa-Pro dipeptidase (441 aa).

Residues aspartate 244, aspartate 255, histidine 336, glutamate 381, and glutamate 420 each contribute to the Mn(2+) site.

It belongs to the peptidase M24B family. Bacterial-type prolidase subfamily. Requires Mn(2+) as cofactor.

The enzyme catalyses Xaa-L-Pro dipeptide + H2O = an L-alpha-amino acid + L-proline. Functionally, splits dipeptides with a prolyl residue in the C-terminal position. The polypeptide is Xaa-Pro dipeptidase (Xanthomonas campestris pv. campestris (strain 8004)).